A 356-amino-acid polypeptide reads, in one-letter code: tRNA N6-adenosine threonylcarbamoyltransferase (356 aa).

2 residues coordinate Fe cation: H111 and H115. Substrate contacts are provided by residues 143 to 147, D178, G191, D195, and N286; that span reads LASGG. D314 is a binding site for Fe cation.

This sequence belongs to the KAE1 / TsaD family. Fe(2+) serves as cofactor.

The protein resides in the cytoplasm. It catalyses the reaction L-threonylcarbamoyladenylate + adenosine(37) in tRNA = N(6)-L-threonylcarbamoyladenosine(37) in tRNA + AMP + H(+). Functionally, required for the formation of a threonylcarbamoyl group on adenosine at position 37 (t(6)A37) in tRNAs that read codons beginning with adenine. Is involved in the transfer of the threonylcarbamoyl moiety of threonylcarbamoyl-AMP (TC-AMP) to the N6 group of A37, together with TsaE and TsaB. TsaD likely plays a direct catalytic role in this reaction. This Sorangium cellulosum (strain So ce56) (Polyangium cellulosum (strain So ce56)) protein is tRNA N6-adenosine threonylcarbamoyltransferase.